We begin with the raw amino-acid sequence, 538 residues long: Cytochrome c-552 (538 aa).

An N-terminal signal peptide occupies residues 1-55 (MKIYLRFVWILIIILNFLLNLFITTNGVIIVNAFKKSLIVAASFASLSLFNSATA). Residue His133 participates in heme c binding. The heme site is built by Cys161, Cys164, and Lys165. Heme c-binding residues include Cys199, Cys202, His203, Cys264, Cys267, and His268. Residues Glu270, Tyr271, Lys316, and Gln318 each contribute to the Ca(2+) site. Tyr271 serves as a coordination point for substrate. His319 serves as a coordination point for substrate. 9 residues coordinate heme c: His330, Cys337, Cys340, His341, His356, Cys369, Cys372, His373, and His448.

It belongs to the cytochrome c-552 family. Requires Ca(2+) as cofactor. It depends on heme c as a cofactor.

The protein localises to the periplasm. The catalysed reaction is 6 Fe(III)-[cytochrome c] + NH4(+) + 2 H2O = 6 Fe(II)-[cytochrome c] + nitrite + 8 H(+). It functions in the pathway nitrogen metabolism; nitrate reduction (assimilation). In terms of biological role, catalyzes the reduction of nitrite to ammonia, consuming six electrons in the process. The polypeptide is Cytochrome c-552 (Haemophilus influenzae (strain ATCC 51907 / DSM 11121 / KW20 / Rd)).